A 426-amino-acid chain; its full sequence is Serine--tRNA ligase (426 aa).

Position 231-233 (231-233) interacts with L-serine; sequence TAE. Position 262-264 (262-264) interacts with ATP; the sequence is RSE. Glu-285 serves as a coordination point for L-serine. Position 349 to 352 (349 to 352) interacts with ATP; the sequence is EISS. Position 385 (Ser-385) interacts with L-serine.

This sequence belongs to the class-II aminoacyl-tRNA synthetase family. Type-1 seryl-tRNA synthetase subfamily. In terms of assembly, homodimer. The tRNA molecule binds across the dimer.

It is found in the cytoplasm. It carries out the reaction tRNA(Ser) + L-serine + ATP = L-seryl-tRNA(Ser) + AMP + diphosphate + H(+). The enzyme catalyses tRNA(Sec) + L-serine + ATP = L-seryl-tRNA(Sec) + AMP + diphosphate + H(+). Its pathway is aminoacyl-tRNA biosynthesis; selenocysteinyl-tRNA(Sec) biosynthesis; L-seryl-tRNA(Sec) from L-serine and tRNA(Sec): step 1/1. Functionally, catalyzes the attachment of serine to tRNA(Ser). Is also able to aminoacylate tRNA(Sec) with serine, to form the misacylated tRNA L-seryl-tRNA(Sec), which will be further converted into selenocysteinyl-tRNA(Sec). This chain is Serine--tRNA ligase, found in Saccharophagus degradans (strain 2-40 / ATCC 43961 / DSM 17024).